The following is a 180-amino-acid chain: MRILGIDPGLRVTGFGIIDVSGHRLAYVASGVIRTPTADLATRLGTIFQGVSTIVREHAPDQSAIEKVFVNVNPQSTLLLGQARGAAICGLVAGGLPVAEYTALQLKQAVVGYGRATKTQMQEMVTRLLNLSGQPGSDAADALGMAICHAHGGNTLSTLGGLAPALAKKGLRVRRGRLVG.

Active-site residues include D7, E66, and D138. Mg(2+)-binding residues include D7, E66, and D138.

Belongs to the RuvC family. As to quaternary structure, homodimer which binds Holliday junction (HJ) DNA. The HJ becomes 2-fold symmetrical on binding to RuvC with unstacked arms; it has a different conformation from HJ DNA in complex with RuvA. In the full resolvosome a probable DNA-RuvA(4)-RuvB(12)-RuvC(2) complex forms which resolves the HJ. It depends on Mg(2+) as a cofactor.

The protein localises to the cytoplasm. It catalyses the reaction Endonucleolytic cleavage at a junction such as a reciprocal single-stranded crossover between two homologous DNA duplexes (Holliday junction).. Functionally, the RuvA-RuvB-RuvC complex processes Holliday junction (HJ) DNA during genetic recombination and DNA repair. Endonuclease that resolves HJ intermediates. Cleaves cruciform DNA by making single-stranded nicks across the HJ at symmetrical positions within the homologous arms, yielding a 5'-phosphate and a 3'-hydroxyl group; requires a central core of homology in the junction. The consensus cleavage sequence is 5'-(A/T)TT(C/G)-3'. Cleavage occurs on the 3'-side of the TT dinucleotide at the point of strand exchange. HJ branch migration catalyzed by RuvA-RuvB allows RuvC to scan DNA until it finds its consensus sequence, where it cleaves and resolves the cruciform DNA. In Burkholderia lata (strain ATCC 17760 / DSM 23089 / LMG 22485 / NCIMB 9086 / R18194 / 383), this protein is Crossover junction endodeoxyribonuclease RuvC.